Here is a 604-residue protein sequence, read N- to C-terminus: MCGIVGVVGNRNATDILMQGLEKLEYRGYDSAGIFVANANQTNLIKSVGRIADLRAKIGIDVAGSTGIGHTRWATHGQSTEDNAHPHTSQTGRFVLVHNGVIENYLHIKTEFLAGHDFKGQTDTEIAVHLIGKFVEEDKLSVLEAFKKALSIIEGSYAFALMDSQATDTIYVAKNKSPLLIGLGEGYNMVCSDAMAMIRETSEFMEIHDKELVILTKDKVTVTDYDGKELIRDSYTAELDLSDIGKGTYPFYMLKEIDEQPTVMRQLISTYADETGNVQVDPAIITSIQEADRLYILAAGTSYHAGFATKNMLEQLTDTPVELGVASEWGYHMPLLSKKPMFILLSQSGETADSRQVLVKANAMGIPSLTVTNVPGSTLSRESTYTMLIHAGPEIAVASTKAYTAQIAALAFLAKAVGEANGKQEALDFNLVHELSLVAQSIEATLSEKDLVAEKVQALLATTRNAFYIGRGNDYYVAMEAALKLKEISYIQCEGFAAGELKHGTISLIEEDTPVIALISSSQLVASHTRGNIQEVAARGAHVLTVVEEGLDREGDDIIVNKVHPFLAPIAMVIPTQLIAYYASLQRGLDVDKPRNLAKAVTVE.

Cys2 (nucleophile; for GATase activity) is an active-site residue. In terms of domain architecture, Glutamine amidotransferase type-2 spans 2-218; sequence CGIVGVVGNR…DKELVILTKD (217 aa). SIS domains lie at 284–423 and 456–594; these read IITS…ANGK and VQAL…VDKP. Lys599 acts as the For Fru-6P isomerization activity in catalysis.

As to quaternary structure, homodimer.

The protein localises to the cytoplasm. The enzyme catalyses D-fructose 6-phosphate + L-glutamine = D-glucosamine 6-phosphate + L-glutamate. Functionally, catalyzes the first step in hexosamine metabolism, converting fructose-6P into glucosamine-6P using glutamine as a nitrogen source. This chain is Glutamine--fructose-6-phosphate aminotransferase [isomerizing], found in Streptococcus pyogenes serotype M18 (strain MGAS8232).